Consider the following 869-residue polypeptide: H(+)/Cl(-) exchange transporter 6 (869 aa).

Over 1 to 80 (MAGCRGSLCC…KKGRWYEVVK (80 aa)) the chain is Cytoplasmic. Helical transmembrane passes span 81 to 113 (WTVV…FGVV) and 128 to 150 (LSLL…LVLI). The Selectivity filter part_1 signature appears at 156–160 (GSGIP). Ser157 contacts chloride. The helical intramembrane region spans 159–166 (IPEIKCYL). Transmembrane regions (helical) follow at residues 176–194 (RLRT…VAGG) and 200–217 (EGPM…LPQF). The Selectivity filter part_2 signature appears at 198-202 (GKEGP). 2 consecutive intramembrane regions (helical) follow at residues 241–253 (FVSA…IAAA) and 257–265 (PIGATLFSL). 3 helical membrane-spanning segments follow: residues 277-294 (TWKV…LNFF), 335-364 (GFFV…YRMR), and 371-392 (KLVR…VFVA). N-linked (GlcNAc...) asparagine glycosylation is found at Asn410, Asn422, and Asn432. The next 2 helical transmembrane spans lie at 462–481 (PITL…WTYG) and 487–511 (GLFV…KSYI). Residues 487-491 (GLFVP) carry the Selectivity filter part_3 motif. Position 489 (Phe489) interacts with chloride. The segment at residues 519–533 (GTFSLIGAAALLGGV) is an intramembrane region (helical). The segment at residues 534–536 (VRM) is an intramembrane region (note=Loop between two helices). The helical intramembrane region spans 537–548 (TISLTVILIEST). The segment at residues 549–552 (NEIT) is an intramembrane region (note=Loop between two helices). A helical membrane pass occupies residues 553–571 (YGLPIMITLMVAKWTGDFF). Residues 572–869 (NKGIYDIHVG…ARLRQHYQTI (298 aa)) are Cytoplasmic-facing. Tyr576 is a chloride binding site. One can recognise a CBS 1 domain in the interval 605–662 (MEPNLTYVYPHTRIQSLVSILRTTVHHAFPVVTENRGNEKEFMKGNQLISNNIKFKKS). 630-632 (HHA) is an ATP binding site. The tract at residues 668-687 (AGEQRRRSQSMKSYPSSELR) is disordered. Polar residues predominate over residues 677–686 (SMKSYPSSEL). Residue Ser773 is modified to Phosphoserine. Positions 807 to 868 (MNPSPFTVSP…QARLRQHYQT (62 aa)) constitute a CBS 2 domain. Residue 849–852 (TRHN) participates in ATP binding.

It belongs to the chloride channel (TC 2.A.49) family. ClC-6/CLCN6 subfamily. N-glycosylated on several asparagine residues.

The protein localises to the late endosome membrane. It catalyses the reaction 2 chloride(in) + H(+)(out) = 2 chloride(out) + H(+)(in). Functionally, voltage-gated channel mediating the exchange of chloride ions against protons. Functions as antiporter and contributes to the acidification of the late endosome lumen. The CLC channel family contains both chloride channels and proton-coupled anion transporters that exchange chloride or another anion for protons. The presence of conserved gating glutamate residues is typical for family members that function as antiporters. In Oryctolagus cuniculus (Rabbit), this protein is H(+)/Cl(-) exchange transporter 6 (CLCN6).